Consider the following 642-residue polypeptide: Mini-chromosome maintenance complex-binding protein (642 aa).

The span at 151–161 (ARVSPSTSYTP) shows a compositional bias: polar residues. Positions 151-200 (ARVSPSTSYTPSRHKRSYEDDEDMDLQPNKQKDQHSGARQAGGLGGLHWR) are disordered. Position 154 is a phosphoserine (S154). At T160 the chain carries Phosphothreonine. Phosphoserine is present on residues S167 and S298.

The protein belongs to the MCMBP family. As to quaternary structure, interacts with the MCM complex: associates with the MCM3-7 complex which lacks MCM2, while it does not interact with the MCM complex when MCM2 is present (MCM2-7 complex). Interacts with the RPA complex, when composed of all RPA1, RPA2 and RPA3 components, but not with RPA1 or RPA2 alone.

It is found in the nucleus. Functionally, associated component of the MCM complex that acts as a regulator of DNA replication. Binds to the MCM complex during late S phase and promotes the disassembly of the MCM complex from chromatin, thereby acting as a key regulator of pre-replication complex (pre-RC) unloading from replicated DNA. Can dissociate the MCM complex without addition of ATP; probably acts by destabilizing interactions of each individual subunits of the MCM complex. Required for sister chromatid cohesion. In Rattus norvegicus (Rat), this protein is Mini-chromosome maintenance complex-binding protein (Mcmbp).